A 533-amino-acid polypeptide reads, in one-letter code: uncharacterized protein (533 aa).

The next 4 helical transmembrane spans lie at 1–21 (MLAF…VAFI), 135–155 (LPRF…IAAL), 193–213 (AIAA…AILA), and 472–492 (LLVN…PLVG).

It is found in the cell membrane. This is an uncharacterized protein from Mycobacterium bovis (strain ATCC BAA-935 / AF2122/97).